Consider the following 504-residue polypeptide: Maturase K (504 aa).

The protein belongs to the intron maturase 2 family. MatK subfamily.

The protein resides in the plastid. It localises to the chloroplast. Usually encoded in the trnK tRNA gene intron. Probably assists in splicing its own and other chloroplast group II introns. This is Maturase K from Gossypium turneri (Cotton).